Here is a 586-residue protein sequence, read N- to C-terminus: MSRNSGTTLEDGPLHADPTTEAPNNATVTTNVTANDENTEKEVDADAAAAAPAEAPKPNQGFRFWAIVAALAFTALLSSLEGTIITSALPKITADLGGGNSFIWVPNGYFLATIVMLPLMAQASNLFGRRWLTLISVATFTLGSGICGGANSQAMLIGGRVVQGFGGGGIALMINIILTDLVPLRERGKYMGIVQMVSAVGAALGPFLGGLLTSKSTWRWVFYINLPIGGTSLVALFFFLRVAKPPPTTLAEKISRIDFSGNAIFIASTVSVLIGVTWGGAVYPWSSFRVIVPLVLGFFGLGLFVVYEWTVAKNPSLPKDIILNRTAATVLGVTFLHTVATYWSFYFMPIYFQAVKGETSFWSGVDTLPLFAGIFPFAILGGMLLAKFGRYKPMHLIGMAIITLSFGLFSLLDQGSSKAAWACFQLLFAVGAGLMIAILLPAMQAPLPESLVALSTGVWTFVRGFGTVWGVTIPSAIFNNQCRLKAADLSDQGVASHLNSGKAYQYATKDFLDSIHDDATRRQVVELFTSSLRTVWYVGVALAGFGWLLIWLEKEVTLRSKLNTKFGLEEKKKAAKADEDVESASA.

Positions 1 to 56 (MSRNSGTTLEDGPLHADPTTEAPNNATVTTNVTANDENTEKEVDADAAAAAPAEAP) are disordered. Composition is skewed to low complexity over residues 19–36 (TTEA…TAND) and 46–56 (DAAAAAPAEAP). Asparagine 25 and asparagine 31 each carry an N-linked (GlcNAc...) asparagine glycan. 8 helical membrane-spanning segments follow: residues 65–85 (WAIV…GTII), 101–121 (SFIW…PLMA), 131–151 (WLTL…GGAN), 164–184 (GFGG…LVPL), 192–212 (GIVQ…GGLL), 220–240 (WVFY…FFFL), 263–283 (AIFI…GAVY), and 290–310 (VIVP…YEWT). Asparagine 324 carries N-linked (GlcNAc...) asparagine glycosylation. 6 helical membrane passes run 330–350 (VLGV…FMPI), 368–388 (LPLF…LAKF), 393–413 (PMHL…SLLD), 420–440 (AWAC…AILL), 458–478 (VWTF…SAIF), and 532–552 (LRTV…LIWL).

Belongs to the major facilitator superfamily.

Its subcellular location is the membrane. Its function is as follows. MFS-type transporter; part of the gene cluster that mediates the biosynthesis of UCS1025A, a member of the pyrrolizidinone family that acts as a strong telomerase inhibitor and displays potent antibacterial and antitumor properties. These compounds share a hemiaminal-containing pyrrolizidinone core fused with a gamma-lactone, giving a furopyrrolizidine that is connected to a decalin fragment. In Acremonium sp, this protein is MFS-type transporter ucsD.